The primary structure comprises 210 residues: Na(+)-translocating NADH-quinone reductase subunit D (210 aa).

Helical transmembrane passes span 42–62, 72–92, 103–123, 131–151, and 178–198; these read FVMT…VSVI, IIVQ…ILKA, VFVG…AFAM, LIDG…VGFF, and NGLM…IWAI.

Belongs to the NqrDE/RnfAE family. In terms of assembly, composed of six subunits; NqrA, NqrB, NqrC, NqrD, NqrE and NqrF.

Its subcellular location is the cell inner membrane. It catalyses the reaction a ubiquinone + n Na(+)(in) + NADH + H(+) = a ubiquinol + n Na(+)(out) + NAD(+). NQR complex catalyzes the reduction of ubiquinone-1 to ubiquinol by two successive reactions, coupled with the transport of Na(+) ions from the cytoplasm to the periplasm. NqrA to NqrE are probably involved in the second step, the conversion of ubisemiquinone to ubiquinol. The protein is Na(+)-translocating NADH-quinone reductase subunit D of Vibrio vulnificus (strain YJ016).